Here is a 141-residue protein sequence, read N- to C-terminus: MAKKVVAQVRLQLEAGKATPAPPVGPALGQRGVNLMEFCKKFNAATADKAGMIIPVIITVYEDRSFTFITKTPPASFLLKKAAKLNSGSQEPKRKMVGKVTRDQIKEIAEIKMKDLNANDIEAAMKIIEGTAKSMGIEVVD.

It belongs to the universal ribosomal protein uL11 family. In terms of assembly, part of the ribosomal stalk of the 50S ribosomal subunit. Interacts with L10 and the large rRNA to form the base of the stalk. L10 forms an elongated spine to which L12 dimers bind in a sequential fashion forming a multimeric L10(L12)X complex. One or more lysine residues are methylated.

In terms of biological role, forms part of the ribosomal stalk which helps the ribosome interact with GTP-bound translation factors. The polypeptide is Large ribosomal subunit protein uL11 (Thermosipho africanus (strain TCF52B)).